The following is a 248-amino-acid chain: Transcription factor MYB1 (248 aa).

HTH myb-type domains follow at residues 9–61 (KEGM…LNYL) and 62–116 (RPGI…GRRV). 2 consecutive DNA-binding regions (H-T-H motif) follow at residues 37 to 61 (WRSL…LNYL) and 89 to 112 (WSLI…NTNL). The tract at residues 118–144 (DQSHQHCRPNPTITSTKPADAPPANAN) is disordered.

The protein localises to the nucleus. In terms of biological role, transcription activator involved in the spatiotemporal regulation of flavonoid biosynthesis specifically in the corms of Montbretia. Activates the promoters of enzymes involved in the biosynthesis of the flavonol kaempferol and the flavonol-glycoside kaempferol-rhamnoside. The polypeptide is Transcription factor MYB1 (Crocosmia x crocosmiiflora (Montbretia)).